A 405-amino-acid polypeptide reads, in one-letter code: Glucose-1-phosphate adenylyltransferase (405 aa).

Residues Tyr96, Gly161, Glu176–Lys177, and Ser194 each bind alpha-D-glucose 1-phosphate.

Belongs to the bacterial/plant glucose-1-phosphate adenylyltransferase family. In terms of assembly, homotetramer.

The enzyme catalyses alpha-D-glucose 1-phosphate + ATP + H(+) = ADP-alpha-D-glucose + diphosphate. It participates in glycan biosynthesis; glycogen biosynthesis. Functionally, involved in the biosynthesis of ADP-glucose, a building block required for the elongation reactions to produce glycogen. Catalyzes the reaction between ATP and alpha-D-glucose 1-phosphate (G1P) to produce pyrophosphate and ADP-Glc. The sequence is that of Glucose-1-phosphate adenylyltransferase from Aliivibrio fischeri (strain ATCC 700601 / ES114) (Vibrio fischeri).